The following is a 252-amino-acid chain: C-X-C motif chemokine 16 (252 aa).

Positions 1–25 are cleaved as a signal peptide; that stretch reads MMLGRTSRLLLVLLFIAYATTSGNG. Over 26 to 198 the chain is Extracellular; the sequence is NEGSKVGSCP…RGPQAGTSAT (173 aa). Disulfide bonds link cysteine 34–cysteine 64 and cysteine 36–cysteine 78. Disordered regions lie at residues 115–145 and 163–195; these read LPEPTEAAPSDTATTSQTYLPSTLQRTQQPT and TTTYTSGHSLGAEPEAKENQKQLKENRGPQAGT. Over residues 125 to 145 the composition is skewed to polar residues; sequence DTATTSQTYLPSTLQRTQQPT. Residues 176-189 show a composition bias toward basic and acidic residues; it reads PEAKENQKQLKENR. A helical membrane pass occupies residues 199–219; the sequence is VPVLSLLAIVFILAGVLLYVV. The Cytoplasmic segment spans residues 220-252; sequence CKRRKNQLLQHPPDLAASLYTCSRRTRAENGTL.

This sequence belongs to the intercrine alpha (chemokine CxC) family. Post-translationally, glycosylated.

The protein localises to the membrane. Functionally, induces a strong chemotactic response. Induces calcium mobilization. Binds to CXCR6/Bonzo. Also acts as a scavenger receptor on macrophages, which specifically binds to OxLDL (oxidized low density lipoprotein), suggesting that it may be involved in pathophysiology such as atherogenesis. This Bos taurus (Bovine) protein is C-X-C motif chemokine 16 (CXCL16).